A 44-amino-acid chain; its full sequence is DNA-directed RNA polymerase subunit Rpo12 (44 aa).

Zn(2+) contacts are provided by cysteine 8, cysteine 22, and cysteine 25.

Belongs to the archaeal Rpo12/eukaryotic RPC10 RNA polymerase subunit family. As to quaternary structure, part of the RNA polymerase complex. It depends on Zn(2+) as a cofactor.

The protein localises to the cytoplasm. It carries out the reaction RNA(n) + a ribonucleoside 5'-triphosphate = RNA(n+1) + diphosphate. In terms of biological role, DNA-dependent RNA polymerase (RNAP) catalyzes the transcription of DNA into RNA using the four ribonucleoside triphosphates as substrates. The sequence is that of DNA-directed RNA polymerase subunit Rpo12 from Halobacterium salinarum (strain ATCC 29341 / DSM 671 / R1).